A 275-amino-acid chain; its full sequence is Elongation factor Ts (275 aa).

Positions 76 to 79 (TDFV) are involved in Mg(2+) ion dislocation from EF-Tu.

This sequence belongs to the EF-Ts family.

It localises to the cytoplasm. In terms of biological role, associates with the EF-Tu.GDP complex and induces the exchange of GDP to GTP. It remains bound to the aminoacyl-tRNA.EF-Tu.GTP complex up to the GTP hydrolysis stage on the ribosome. The chain is Elongation factor Ts from Corynebacterium glutamicum (strain R).